We begin with the raw amino-acid sequence, 666 residues long: SNARE-interacting protein KEULE (666 aa).

Positions 340–377 (KNKAAQLQGKRDGAELSTRDLQKMVQALPQYSEQIDKL) form a coiled coil. Residues 534 to 589 (KEDFPCMNDPSPSFHGSTSLSSAASSSQGQAAQSMRSRRTPTWAKPRGSDDGYSSD) form a disordered region. Low complexity predominate over residues 550-568 (STSLSSAASSSQGQAAQSM).

Belongs to the STXBP/unc-18/SEC1 family. In terms of assembly, binds the syntaxin KNOLLE. Interacts with SEC6. In terms of tissue distribution, expressed throughout the plant, both in mitotically active and quiescent cells. Enriched in dividing tissues.

It is found in the cytoplasm. Its subcellular location is the membrane. It localises to the cytoskeleton. The protein localises to the phragmoplast. Functionally, regulator of vesicle trafficking involved in cytokinesis and root hair development, but not required for cell elongation. The chain is SNARE-interacting protein KEULE (KEU) from Arabidopsis thaliana (Mouse-ear cress).